The primary structure comprises 1011 residues: Vacuolar membrane protease (1011 aa).

The Cytoplasmic portion of the chain corresponds to methionine 1–asparagine 14. Residues leucine 15–phenylalanine 35 form a helical membrane-spanning segment. Residues arginine 36–leucine 352 lie on the Vacuolar side of the membrane. Histidine 149, aspartate 161, glutamate 194, glutamate 219, and histidine 293 together coordinate Zn(2+). A helical transmembrane segment spans residues phenylalanine 353–valine 373. The Cytoplasmic segment spans residues alanine 374–arginine 390. A helical membrane pass occupies residues leucine 391–glutamine 411. The Vacuolar portion of the chain corresponds to leucine 412 to aspartate 420. A helical transmembrane segment spans residues tyrosine 421–serine 441. At serine 442 to aspartate 451 the chain is on the cytoplasmic side. The helical transmembrane segment at phenylalanine 452–threonine 472 threads the bilayer. Residues arginine 473–proline 487 are Vacuolar-facing. A helical transmembrane segment spans residues phenylalanine 488–phenylalanine 508. The Cytoplasmic segment spans residues lysine 509–glutamine 647. Residues methionine 534–serine 585 are disordered. Basic residues predominate over residues serine 542 to proline 567. Positions arginine 568–glutamate 578 are enriched in polar residues. Residues phenylalanine 648–glycine 668 traverse the membrane as a helical segment. Residues alanine 669–threonine 681 lie on the Vacuolar side of the membrane. An N-linked (GlcNAc...) asparagine glycan is attached at asparagine 671. The chain crosses the membrane as a helical span at residues threonine 682–phenylalanine 702. At threonine 703–serine 708 the chain is on the cytoplasmic side. A helical transmembrane segment spans residues phenylalanine 709–proline 729. Residues proline 730–leucine 1011 are Vacuolar-facing. Asparagine 751, asparagine 825, and asparagine 854 each carry an N-linked (GlcNAc...) asparagine glycan.

The protein belongs to the peptidase M28 family. Requires Zn(2+) as cofactor.

Its subcellular location is the vacuole membrane. In terms of biological role, may be involved in vacuolar sorting and osmoregulation. The polypeptide is Vacuolar membrane protease (Eremothecium gossypii (strain ATCC 10895 / CBS 109.51 / FGSC 9923 / NRRL Y-1056) (Yeast)).